The following is a 184-amino-acid chain: Peptide deformylase (184 aa).

Fe cation-binding residues include C111 and H154. The active site involves E155. A Fe cation-binding site is contributed by H158.

It belongs to the polypeptide deformylase family. Fe(2+) is required as a cofactor.

It carries out the reaction N-terminal N-formyl-L-methionyl-[peptide] + H2O = N-terminal L-methionyl-[peptide] + formate. Its function is as follows. Removes the formyl group from the N-terminal Met of newly synthesized proteins. Requires at least a dipeptide for an efficient rate of reaction. N-terminal L-methionine is a prerequisite for activity but the enzyme has broad specificity at other positions. The sequence is that of Peptide deformylase from Lactobacillus delbrueckii subsp. bulgaricus (strain ATCC 11842 / DSM 20081 / BCRC 10696 / JCM 1002 / NBRC 13953 / NCIMB 11778 / NCTC 12712 / WDCM 00102 / Lb 14).